Reading from the N-terminus, the 542-residue chain is Propane 2-monooxygenase, hydroxylase component large subunit (542 aa).

E97, E127, H130, E192, E226, and H229 together coordinate Fe cation.

This sequence belongs to the TmoA/XamoA family. In terms of assembly, the propane 2-monooxygenase multicomponent enzyme system is composed of an electron transfer component and a monooxygenase component interacting with the effector protein MimD. The electron transfer component is composed of a reductase (MimB), and the monooxygenase component is formed by a large subunit (MimA) and a small subunit (MimC). Requires the presence of the chaperonin-like protein MimG to ensure a productive folding, resulting of a soluble MimA, which leads to the active form of MimABCD. Requires Fe(2+) as cofactor.

The catalysed reaction is propane + NADH + O2 + H(+) = propan-2-ol + NAD(+) + H2O. It catalyses the reaction acetone + NADH + O2 + H(+) = hydroxyacetone + NAD(+) + H2O. The enzyme catalyses butan-2-one + NADH + O2 + H(+) = 1-hydroxy-2-butanone + NAD(+) + H2O. It carries out the reaction phenol + NADH + O2 + H(+) = hydroquinone + NAD(+) + H2O. Its function is as follows. Component of the propane 2-monooxygenase multicomponent enzyme system which is involved in the degradation of propane via the O2-dependent hydroxylation of propane. Also involved in the degradation of acetone via the O2-dependent hydroxylation of acetone. Also able to catalyze the oxidation of phenol, methylethylketone (2-butanone), 1-propanol and 2-propanol. The chain is Propane 2-monooxygenase, hydroxylase component large subunit from Mycolicibacterium smegmatis (strain ATCC 700084 / mc(2)155) (Mycobacterium smegmatis).